A 106-amino-acid chain; its full sequence is A-type ATP synthase subunit F (106 aa).

It belongs to the V-ATPase F subunit family. As to quaternary structure, has multiple subunits with at least A(3), B(3), C, D, E, F, H, I and proteolipid K(x).

It localises to the cell membrane. Functionally, component of the A-type ATP synthase that produces ATP from ADP in the presence of a proton gradient across the membrane. The protein is A-type ATP synthase subunit F of Methanosphaera stadtmanae (strain ATCC 43021 / DSM 3091 / JCM 11832 / MCB-3).